The sequence spans 217 residues: Probable transaldolase (217 aa).

Lys83 (schiff-base intermediate with substrate) is an active-site residue.

It belongs to the transaldolase family. Type 3B subfamily.

The protein localises to the cytoplasm. It carries out the reaction D-sedoheptulose 7-phosphate + D-glyceraldehyde 3-phosphate = D-erythrose 4-phosphate + beta-D-fructose 6-phosphate. It participates in carbohydrate degradation; pentose phosphate pathway; D-glyceraldehyde 3-phosphate and beta-D-fructose 6-phosphate from D-ribose 5-phosphate and D-xylulose 5-phosphate (non-oxidative stage): step 2/3. Transaldolase is important for the balance of metabolites in the pentose-phosphate pathway. In Methanocaldococcus jannaschii (strain ATCC 43067 / DSM 2661 / JAL-1 / JCM 10045 / NBRC 100440) (Methanococcus jannaschii), this protein is Probable transaldolase (tal).